The sequence spans 941 residues: ATP-dependent 6-phosphofructokinase subunit beta (941 aa).

The interval 2 to 558 (PDASLFNGTS…HMKNFISTNS (557 aa)) is N-terminal catalytic PFK domain 1. ATP is bound by residues Gly-191, 255–256 (RC), and 285–288 (GDGS). Mg(2+) is bound at residue Asp-286. Beta-D-fructose 6-phosphate-binding positions include 331–333 (SID), Arg-368, 375–377 (MGR), Glu-432, Arg-460, and 466–469 (HVQR). Asp-333 acts as the Proton acceptor in catalysis. The tract at residues 559–572 (ADHVPPSLPLEKRK) is interdomain linker. The interval 573 to 941 (KVAIINVGAP…SDMLSGRTSL (369 aa)) is C-terminal regulatory PFK domain 2. Beta-D-fructose 2,6-bisphosphate contacts are provided by residues Arg-643, 701–705 (TISNN), Arg-739, 746–748 (QGG), Glu-806, Lys-832, 838–841 (HVQQ), and Arg-918.

The protein belongs to the phosphofructokinase type A (PFKA) family. ATP-dependent PFK group I subfamily. Eukaryotic two domain clade 'E' sub-subfamily. As to quaternary structure, heterododecamer of 4 alpha, 4 beta and 4 gamma chains. The gamma chain bridges the N-terminal halves of the alpha and beta subunits. Mg(2+) is required as a cofactor.

The protein resides in the cytoplasm. The enzyme catalyses beta-D-fructose 6-phosphate + ATP = beta-D-fructose 1,6-bisphosphate + ADP + H(+). It functions in the pathway carbohydrate degradation; glycolysis; D-glyceraldehyde 3-phosphate and glycerone phosphate from D-glucose: step 3/4. Allosterically activated by ADP, AMP, or fructose 2,6-bisphosphate, and allosterically inhibited by ATP or citrate. Functionally, catalyzes the phosphorylation of D-fructose 6-phosphate to fructose 1,6-bisphosphate by ATP, the first committing step of glycolysis. This is ATP-dependent 6-phosphofructokinase subunit beta (PFK2) from Komagataella phaffii (strain GS115 / ATCC 20864) (Yeast).